A 434-amino-acid polypeptide reads, in one-letter code: Beta-phenylalanine transaminase (434 aa).

(S)-3-amino-3-phenylpropanoate is bound at residue R41. Pyridoxal 5'-phosphate is bound at residue 132-133 (GT). K267 is modified (N6-(pyridoxal phosphate)lysine). Residue T300 coordinates pyridoxal 5'-phosphate.

Belongs to the class-III pyridoxal-phosphate-dependent aminotransferase family. Homodimer. The cofactor is pyridoxal 5'-phosphate.

It catalyses the reaction (S)-3-amino-3-phenylpropanoate + 2-oxoglutarate = 3-oxo-3-phenylpropanoate + L-glutamate. The catalysed reaction is (S)-3-amino-3-phenylpropanoate + pyruvate = 3-oxo-3-phenylpropanoate + L-alanine. Is inhibited by 2-aminooxyacetate (AOA), a mimic of beta-alanine and a known inhibitor of aminotransferases. In terms of biological role, aminotransferase that acts exclusively on beta-amino acids and exhibits a broad substrate range in vitro, accepting meta-, para- and, to a lesser extent, ortho-substituted beta-phenylalanine derivatives as amino donors, and 2-oxoglutarate or pyruvate as amino acceptors. Is highly enantioselective toward (S)-beta-phenylalanine (is not active with (R)-beta-phenylalanine) and derivatives with different substituents on the phenyl ring, allowing the kinetic resolution of various racemic beta-amino acids to yield (R)-beta-amino acids with &gt;95% enantiomeric excess (ee). Highly prefers aromatic beta-amino acids over aliphatic beta-amino acids; cannot use beta-alanine or beta-glutamate as substrate. Is likely involved in the beta-phenylalanine degradation pathway that allows V.paradoxus strain CBF3 to use beta-phenylalanine as a sole nitrogen source. In Variovorax paradoxus, this protein is Beta-phenylalanine transaminase.